Consider the following 283-residue polypeptide: MAVYAVGDLQGCLDPLKCLLERVAFDPAKDRLWLVGDLVNRGPQSLETLRFLYAMRESVVSVLGNHDLHLLAVAHKSERLKKSDTLREILEAPDREPLLDWLRRLPLLHYDEQRKVALVHAGIPPQWSLEKARLRAAEVEQALRDDQRLPLFLDGMYGNEPAKWDKKLHGIDRLRVITNYFTRMRFCTEDGKLDLKSKEGLDTAPPGYAPWFSFPSRKTRGEKIIFGHWAALEGHCDEPGLFALDTGCVWGARMTLLNVDSGERLSCDCAEQRAPARPAATPA.

It belongs to the Ap4A hydrolase family.

It carries out the reaction P(1),P(4)-bis(5'-adenosyl) tetraphosphate + H2O = 2 ADP + 2 H(+). Functionally, hydrolyzes diadenosine 5',5'''-P1,P4-tetraphosphate to yield ADP. The chain is Bis(5'-nucleosyl)-tetraphosphatase, symmetrical from Pseudomonas aeruginosa (strain LESB58).